The following is a 140-amino-acid chain: Non-specific lipid transfer protein GPI-anchored 33 (140 aa).

The signal sequence occupies residues 1 to 27; that stretch reads MAYTNKVTISAAVATMMLFLAVTIVDA. 4 disulfides stabilise this stretch: C40-C80, C52-C64, C65-C104, and C78-C112. N91 is a glycosylation site (N-linked (GlcNAc...) asparagine). Residue G115 is the site of GPI-anchor amidated glycine attachment. A propeptide spans 116–140 (removed in mature form); that stretch reads DASGGSTNKIAASMVLLGLVASLFF.

Belongs to the plant LTP family.

Its subcellular location is the cell membrane. Its function is as follows. Probable lipid transfer protein. This Arabidopsis thaliana (Mouse-ear cress) protein is Non-specific lipid transfer protein GPI-anchored 33.